The chain runs to 189 residues: MSAIVIAIVVLTILALVFGVLLGFAAEKFKVEGNPLTDQIEALLPQTQCGQCGYPGCRPYAEAIANGDKVNKCPPGGAATMEKLADLMGVEPEPLNVTEAVQIKKVAYIREDECIGCTKCIQACPVDAILGSGKLMHTVITDYCTGCDLCVAPCPVDCIDMLPVEQTTKTWNWQLNAIPVKQLQEDKPC.

The hydrophobic stretch occupies residues 1-26 (MSAIVIAIVVLTILALVFGVLLGFAA). The region spanning 32-90 (EGNPLTDQIEALLPQTQCGQCGYPGCRPYAEAIANGDKVNKCPPGGAATMEKLADLMGV) is the 4Fe-4S domain. [4Fe-4S] cluster-binding residues include C49, C52, C57, C73, C114, C117, C120, C124, C144, C147, C150, and C154. 2 consecutive 4Fe-4S ferredoxin-type domains span residues 105-134 (KVAY…GSGK) and 135-164 (LMHT…MLPV).

It belongs to the 4Fe4S bacterial-type ferredoxin family. RnfB subfamily. In terms of assembly, the complex is composed of six subunits: RnfA, RnfB, RnfC, RnfD, RnfE and RnfG. It depends on [4Fe-4S] cluster as a cofactor.

It is found in the cell inner membrane. Part of a membrane-bound complex that couples electron transfer with translocation of ions across the membrane. The chain is Ion-translocating oxidoreductase complex subunit B from Shewanella pealeana (strain ATCC 700345 / ANG-SQ1).